A 157-amino-acid chain; its full sequence is Ribonuclease H (157 aa).

Residues N3–T144 form the RNase H type-1 domain. Mg(2+)-binding residues include D12, E50, D72, and D136.

This sequence belongs to the RNase H family. As to quaternary structure, monomer. The cofactor is Mg(2+).

The protein localises to the cytoplasm. The enzyme catalyses Endonucleolytic cleavage to 5'-phosphomonoester.. In terms of biological role, endonuclease that specifically degrades the RNA of RNA-DNA hybrids. The chain is Ribonuclease H from Idiomarina loihiensis (strain ATCC BAA-735 / DSM 15497 / L2-TR).